A 154-amino-acid chain; its full sequence is Large ribosomal subunit protein uL13 (154 aa).

The protein belongs to the universal ribosomal protein uL13 family. Part of the 50S ribosomal subunit.

Its function is as follows. This protein is one of the early assembly proteins of the 50S ribosomal subunit, although it is not seen to bind rRNA by itself. It is important during the early stages of 50S assembly. This Bradyrhizobium sp. (strain BTAi1 / ATCC BAA-1182) protein is Large ribosomal subunit protein uL13.